The primary structure comprises 419 residues: DNA ligase (419 aa).

The NTD stretch occupies residues 1–120; sequence MLSQFPGQCS…ARQKRGAHTN (120 aa). Residues 121–317 form an AD domain region; it reads RGMIPPMLVK…NYHSPHLAKL (197 aa). H149, K151, E203, and F232 together coordinate ATP. The active-site N6-AMP-lysine intermediate is K151. E203 is a binding site for a divalent metal cation. E291 is an a divalent metal cation binding site. ATP contacts are provided by I294 and K316. Residues 318–419 are OB domain; sequence KPLLDAEFIL…REPINVLEII (102 aa).

Belongs to the ATP-dependent DNA ligase family. Requires a divalent metal cation as cofactor.

The protein resides in the virion. It carries out the reaction ATP + (deoxyribonucleotide)n-3'-hydroxyl + 5'-phospho-(deoxyribonucleotide)m = (deoxyribonucleotide)n+m + AMP + diphosphate.. Functionally, very low-fidelity DNA ligase that seals nicks in double-stranded DNA during DNA repair. Together with the viral repair DNA polymerase X, fills the single nucleotide gaps generated by the AP endonuclease. It is not essential for viral replication and recombination. Displays a very low adenylation activity towards DNA with 3'-dideoxy- or 3'-amino-terminated nicks compared to regular nick DNA. The chain is DNA ligase (LIG) from Ornithodoros (relapsing fever ticks).